The primary structure comprises 332 residues: Geranylgeranyl pyrophosphate synthase 2 (332 aa).

The isopentenyl diphosphate site is built by lysine 55, arginine 58, and histidine 87. Positions 94 and 98 each coordinate Mg(2+). Arginine 103 provides a ligand contact to dimethylallyl diphosphate. Arginine 104 provides a ligand contact to isopentenyl diphosphate. Lysine 181, threonine 182, and glutamine 218 together coordinate dimethylallyl diphosphate. Position 221 (aspartate 221) interacts with Mg(2+). Asparagine 225, lysine 235, and lysine 245 together coordinate dimethylallyl diphosphate.

It belongs to the FPP/GGPP synthase family. Mg(2+) serves as cofactor.

The catalysed reaction is isopentenyl diphosphate + dimethylallyl diphosphate = (2E)-geranyl diphosphate + diphosphate. It catalyses the reaction isopentenyl diphosphate + (2E)-geranyl diphosphate = (2E,6E)-farnesyl diphosphate + diphosphate. It carries out the reaction isopentenyl diphosphate + (2E,6E)-farnesyl diphosphate = (2E,6E,10E)-geranylgeranyl diphosphate + diphosphate. Its function is as follows. Geranylgeranyl pyrophosphate synthase; part of the gene cluster 3 that mediates the biosynthesis of an isoprenoid secondary metabolite. The sequence is that of Geranylgeranyl pyrophosphate synthase 2 (GGS2) from Zymoseptoria tritici (strain CBS 115943 / IPO323) (Speckled leaf blotch fungus).